The sequence spans 773 residues: Immunoglobulin domain and leucine-rich repeat-containing protein 2 (773 aa).

The signal sequence occupies residues 1 to 20 (MRKFVFFVVAILIQIHTTTS). The Extracellular segment spans residues 21–493 (QRNRSSSPSG…DWYSYDVFNS (473 aa)). LRR repeat units lie at residues 52-73 (TRNI…KIYG), 74-96 (SNIQ…IFAP), 97-120 (FPQL…VIHP), 122-144 (LKVL…LLSI), 145-167 (FPKI…DTSN), and 168-191 (TKLK…TLRV). Asparagine 114 carries an N-linked (GlcNAc...) asparagine glycan. Asparagine 204 is a glycosylation site (N-linked (GlcNAc...) asparagine). LRR repeat units follow at residues 206-230 (STKL…DWKF), 233-251 (LRSL…QLDA), 252-275 (PLLN…ILTP), and 296-319 (PSTV…FIPM). Residues 349 to 479 (PVYAQTSIRK…GKDYGIYHFR (131 aa)) form the Ig-like domain. Asparagine 361 and asparagine 379 each carry an N-linked (GlcNAc...) asparagine glycan. A disulfide bridge connects residues cysteine 396 and cysteine 463. A helical membrane pass occupies residues 494 to 514 (VFWGGLATSLIVCLISFLLNI). At 515–773 (TWILTRKSAL…RSPDSPPEKR (259 aa)) the chain is on the cytoplasmic side. The segment at 725-773 (VRPGIIPTNAPSIRFTTKPTTSSISNEASTSSPSSSGAHRSPDSPPEKR) is disordered. Residues 733–745 (NAPSIRFTTKPTT) are compositionally biased toward polar residues. The segment covering 746–763 (SSISNEASTSSPSSSGAH) has biased composition (low complexity). Residues 764–773 (RSPDSPPEKR) are compositionally biased toward basic and acidic residues.

It localises to the membrane. This Caenorhabditis elegans protein is Immunoglobulin domain and leucine-rich repeat-containing protein 2.